The primary structure comprises 445 residues: Phosphoglucosamine mutase (445 aa).

Ser-102 functions as the Phosphoserine intermediate in the catalytic mechanism. Mg(2+) contacts are provided by Ser-102, Asp-241, Asp-243, and Asp-245. At Ser-102 the chain carries Phosphoserine.

Belongs to the phosphohexose mutase family. It depends on Mg(2+) as a cofactor. Activated by phosphorylation.

The catalysed reaction is alpha-D-glucosamine 1-phosphate = D-glucosamine 6-phosphate. Catalyzes the conversion of glucosamine-6-phosphate to glucosamine-1-phosphate. The chain is Phosphoglucosamine mutase from Zymomonas mobilis subsp. mobilis (strain ATCC 31821 / ZM4 / CP4).